An 838-amino-acid chain; its full sequence is Protein translocase subunit SecA 1 (838 aa).

ATP is bound by residues Gln85, Gly103–Thr107, and Asp493. The Zn(2+) site is built by Cys823, Cys825, Cys834, and His835.

This sequence belongs to the SecA family. In terms of assembly, monomer and homodimer. Part of the essential Sec protein translocation apparatus which comprises SecA, SecYEG and auxiliary proteins SecDF. Other proteins may also be involved. Zn(2+) is required as a cofactor.

The protein resides in the cell membrane. It localises to the cytoplasm. The enzyme catalyses ATP + H2O + cellular proteinSide 1 = ADP + phosphate + cellular proteinSide 2.. Part of the Sec protein translocase complex. Interacts with the SecYEG preprotein conducting channel. Has a central role in coupling the hydrolysis of ATP to the transfer of proteins into and across the cell membrane, serving as an ATP-driven molecular motor driving the stepwise translocation of polypeptide chains across the membrane. The chain is Protein translocase subunit SecA 1 from Streptococcus gordonii.